Here is a 59-residue protein sequence, read N- to C-terminus: MRQLKGKPKKETSKDKKERKQAMQEARQQITTVVLPTLAVVVLLIVVFVYVATRPTITE.

The tract at residues 1–23 (MRQLKGKPKKETSKDKKERKQAM) is disordered. Positions 9 to 22 (KKETSKDKKERKQA) are enriched in basic and acidic residues. A coiled-coil region spans residues 9–31 (KKETSKDKKERKQAMQEARQQIT). The chain crosses the membrane as a helical span at residues 32-52 (TVVLPTLAVVVLLIVVFVYVA).

This sequence belongs to the SMCO4 family.

The protein localises to the membrane. The sequence is that of Single-pass membrane and coiled-coil domain-containing protein 4 (SMCO4) from Homo sapiens (Human).